We begin with the raw amino-acid sequence, 145 residues long: Large ribosomal subunit protein uL11 (145 aa).

The protein belongs to the universal ribosomal protein uL11 family. As to quaternary structure, part of the ribosomal stalk of the 50S ribosomal subunit. Interacts with L10 and the large rRNA to form the base of the stalk. L10 forms an elongated spine to which L12 dimers bind in a sequential fashion forming a multimeric L10(L12)X complex. Post-translationally, one or more lysine residues are methylated.

Forms part of the ribosomal stalk which helps the ribosome interact with GTP-bound translation factors. This is Large ribosomal subunit protein uL11 from Rickettsia typhi (strain ATCC VR-144 / Wilmington).